Reading from the N-terminus, the 334-residue chain is UDP-N-acetylglucosamine 4,6-dehydratase (inverting) (334 aa).

Residues 13–16 (TGSF), 37–42 (SRDELK), 61–62 (DV), A81, K85, and 123–124 (LS) each bind NADP(+). K85 provides a ligand contact to substrate. Residue K127 is part of the active site. Y135 and K139 together coordinate NADP(+). Residue N167 participates in substrate binding. 168 to 172 (VVGSR) lines the NADP(+) pocket. Positions 175, 193, 252, and 255 each coordinate substrate.

The protein belongs to the polysaccharide synthase family. As to quaternary structure, homohexamer. The cofactor is NADP(+).

The catalysed reaction is UDP-N-acetyl-alpha-D-glucosamine = UDP-2-acetamido-2,6-dideoxy-beta-L-arabino-hex-4-ulose + H2O. Catalyzes the first step in the biosynthesis of pseudaminic acid, a sialic-acid-like sugar that is used to modify flagellin. Has both C6 dehydratase and C5 epimerase activities that result in the production of both UDP-2-acetamido-2,6-dideoxy-beta-L-arabino-4-hexulose and UDP-2-acetamido-2,6-dideoxy-alpha-D-xylo-4-hexulose. This chain is UDP-N-acetylglucosamine 4,6-dehydratase (inverting) (pseB), found in Campylobacter jejuni subsp. jejuni serotype O:23/36 (strain 81-176).